A 159-amino-acid chain; its full sequence is Phosphopantetheine adenylyltransferase (159 aa).

S8 provides a ligand contact to substrate. ATP-binding positions include S8 to F9 and H16. K40, T72, and R86 together coordinate substrate. ATP contacts are provided by residues G87–R89, E97, and Y122–S128.

Belongs to the bacterial CoaD family. In terms of assembly, homohexamer. Mg(2+) serves as cofactor.

The protein localises to the cytoplasm. The catalysed reaction is (R)-4'-phosphopantetheine + ATP + H(+) = 3'-dephospho-CoA + diphosphate. Its pathway is cofactor biosynthesis; coenzyme A biosynthesis; CoA from (R)-pantothenate: step 4/5. Its function is as follows. Reversibly transfers an adenylyl group from ATP to 4'-phosphopantetheine, yielding dephospho-CoA (dPCoA) and pyrophosphate. In Synechocystis sp. (strain ATCC 27184 / PCC 6803 / Kazusa), this protein is Phosphopantetheine adenylyltransferase.